A 479-amino-acid chain; its full sequence is RHO1 GEF localizing protein 1 (479 aa).

Residues 460 to 479 (SQKDPSRTDPSKLRRVPVIQ) form a disordered region.

In terms of biological role, regulator of RHO1 signaling that acts as a cofactor required for the efficient localization of the TUS1 GTP exchange factor (GEF) for RHO1 to the bud neck during all phases of cytokinesis. RHO1 is a key, essential hub protein in the cell wall integrity (CWI) pathway in which activated RHO1-GTP binds directly to and activates multiple different downstream effectors required for cell wall synthesis and actin assembly during cytokinesis. This is RHO1 GEF localizing protein 1 from Saccharomyces cerevisiae (strain ATCC 204508 / S288c) (Baker's yeast).